Reading from the N-terminus, the 72-residue chain is uncharacterized protein (72 aa).

Residues 51-72 form a disordered region; that stretch reads AKGGRQRGETVVVDDQCKEHKE.

This sequence belongs to the YiiE family.

This is an uncharacterized protein from Escherichia coli O6:K15:H31 (strain 536 / UPEC).